The primary structure comprises 253 residues: Ribosomal RNA small subunit methyltransferase A (253 aa).

Residues histidine 12, leucine 14, glycine 39, glutamate 60, aspartate 81, and asparagine 104 each contribute to the S-adenosyl-L-methionine site.

It belongs to the class I-like SAM-binding methyltransferase superfamily. rRNA adenine N(6)-methyltransferase family. RsmA subfamily.

The protein resides in the cytoplasm. The enzyme catalyses adenosine(1518)/adenosine(1519) in 16S rRNA + 4 S-adenosyl-L-methionine = N(6)-dimethyladenosine(1518)/N(6)-dimethyladenosine(1519) in 16S rRNA + 4 S-adenosyl-L-homocysteine + 4 H(+). Functionally, specifically dimethylates two adjacent adenosines (A1518 and A1519) in the loop of a conserved hairpin near the 3'-end of 16S rRNA in the 30S particle. May play a critical role in biogenesis of 30S subunits. This is Ribosomal RNA small subunit methyltransferase A from Paracidovorax citrulli (strain AAC00-1) (Acidovorax citrulli).